We begin with the raw amino-acid sequence, 418 residues long: Putative ion-transport protein YfeO (418 aa).

A run of 12 helical transmembrane segments spans residues 10 to 30 (LLLS…LIVV), 54 to 74 (DSPL…GLVI), 99 to 119 (ALPG…SLGP), 120 to 140 (EHPI…RLLP), 149 to 169 (ILAS…AALI), 186 to 206 (LFAP…FFHP), 223 to 243 (ILSG…AVWC), 258 to 278 (VLVL…GGPV), 300 to 320 (DYFL…ASGF), 322 to 342 (GGRI…LHEH), 343 to 363 (VPAV…VLVV), and 371 to 391 (LFMA…CIVM).

It belongs to the chloride channel (TC 2.A.49) family.

It is found in the cell membrane. The sequence is that of Putative ion-transport protein YfeO from Escherichia coli (strain 55989 / EAEC).